A 392-amino-acid chain; its full sequence is Methylthioribose-1-phosphate isomerase (392 aa).

The active-site Proton donor is aspartate 268.

It belongs to the eIF-2B alpha/beta/delta subunits family. MtnA subfamily.

The protein resides in the cytoplasm. It is found in the nucleus. The catalysed reaction is 5-(methylsulfanyl)-alpha-D-ribose 1-phosphate = 5-(methylsulfanyl)-D-ribulose 1-phosphate. It functions in the pathway amino-acid biosynthesis; L-methionine biosynthesis via salvage pathway; L-methionine from S-methyl-5-thio-alpha-D-ribose 1-phosphate: step 1/6. Its function is as follows. Catalyzes the interconversion of methylthioribose-1-phosphate (MTR-1-P) into methylthioribulose-1-phosphate (MTRu-1-P). The chain is Methylthioribose-1-phosphate isomerase from Ajellomyces capsulatus (strain G186AR / H82 / ATCC MYA-2454 / RMSCC 2432) (Darling's disease fungus).